Here is an 804-residue protein sequence, read N- to C-terminus: DNA mismatch repair protein MutS (804 aa).

614 to 621 (GPNMAGKS) is a binding site for ATP.

This sequence belongs to the DNA mismatch repair MutS family.

Its function is as follows. This protein is involved in the repair of mismatches in DNA. It is possible that it carries out the mismatch recognition step. This protein has a weak ATPase activity. The sequence is that of DNA mismatch repair protein MutS from Ehrlichia chaffeensis (strain ATCC CRL-10679 / Arkansas).